The sequence spans 144 residues: Large ribosomal subunit protein uL16 (144 aa).

Belongs to the universal ribosomal protein uL16 family. As to quaternary structure, part of the 50S ribosomal subunit.

In terms of biological role, binds 23S rRNA and is also seen to make contacts with the A and possibly P site tRNAs. This Erythrobacter litoralis (strain HTCC2594) protein is Large ribosomal subunit protein uL16.